The following is a 224-amino-acid chain: Proteasome subunit beta (224 aa).

A propeptide spans 1–6 (MDVMKG) (removed in mature form; by autocatalysis). Catalysis depends on Thr-7, which acts as the Nucleophile.

It belongs to the peptidase T1B family. The 20S proteasome core is composed of 14 alpha and 14 beta subunits that assemble into four stacked heptameric rings, resulting in a barrel-shaped structure. The two inner rings, each composed of seven catalytic beta subunits, are sandwiched by two outer rings, each composed of seven alpha subunits. The catalytic chamber with the active sites is on the inside of the barrel. Has a gated structure, the ends of the cylinder being occluded by the N-termini of the alpha-subunits. Is capped at one or both ends by the proteasome regulatory ATPase, PAN.

It localises to the cytoplasm. It catalyses the reaction Cleavage of peptide bonds with very broad specificity.. With respect to regulation, the formation of the proteasomal ATPase PAN-20S proteasome complex, via the docking of the C-termini of PAN into the intersubunit pockets in the alpha-rings, triggers opening of the gate for substrate entry. Interconversion between the open-gate and close-gate conformations leads to a dynamic regulation of the 20S proteasome proteolysis activity. Functionally, component of the proteasome core, a large protease complex with broad specificity involved in protein degradation. The M.jannaschii proteasome is able to cleave oligopeptides after Glu, Asp, Tyr, Phe, Trp, slightly after Arg, but not after Ala. Thus, displays caspase-like and chymotrypsin-like activities and low level of trypsin-like activity. In Methanocaldococcus jannaschii (strain ATCC 43067 / DSM 2661 / JAL-1 / JCM 10045 / NBRC 100440) (Methanococcus jannaschii), this protein is Proteasome subunit beta.